Here is a 449-residue protein sequence, read N- to C-terminus: Cytochrome P450 monooxygenase iliC (449 aa).

The chain crosses the membrane as a helical span at residues 28-44 (TFAITFMGVKQICTIEG). Cys397 provides a ligand contact to heme.

This sequence belongs to the cytochrome P450 family. It depends on heme as a cofactor.

The protein localises to the membrane. It carries out the reaction (3E,5S)-3-[(2E,4E,8S,10E,12Z)-1-hydroxy-4,8-dimethyltetradeca-2,4,10,12-tetraen-1-ylidene]-5-[(4-hydroxyphenyl)methyl]pyrrolidine-2,4-dione + reduced [NADPH--hemoprotein reductase] + O2 = 3-[(2E,4E,8S,10E,12Z)-4,8-dimethyltetradeca-2,4,10,12-tetraenoyl]-4-hydroxy-5-(4-hydroxyphenyl)-1,2-dihydropyridin-2-one + oxidized [NADPH--hemoprotein reductase] + 2 H2O. Its pathway is mycotoxin biosynthesis. In terms of biological role, cytochrome P450 monooxygenase; part of the gene cluster that mediates the biosynthesis of ilicicolin H, a 4-hydroxy-2-pyridonealkaloid that has potent and broad antifungal activities by inhibiting the mitochondrial respiration chain. IliC catalyzes the ring expansion of the tetramate intermediate to the acyclic 2-pyridone intermediate that contains the trans bis-diene chain. The biosynthesis of ilicicolin H starts with formation of the tetramic acid by the hybrid PKS-NRPS synthetase iliA with the partnering trans-enoyl reductase iliB since iliA lacks a designated enoylreductase (ER) domain. The cytochrome P450 monooxygenase iliC then catalyzes the ring expansion of the tetramate to the acyclic 2-pyridone. The pericyclase iliD further converts the acyclic 2-pyridone into 8-epi-ilicicolin H. 8-epi-ilicicolin H might then spontaneously convert to ilicicolin H since ilicicolin H is produced in the absence of the epimerase iliE, in contrast to what was observed for the Talaromyces variabilis ilicolin H biosynthetic pathway. The polypeptide is Cytochrome P450 monooxygenase iliC (Hypocrea jecorina (strain QM6a) (Trichoderma reesei)).